The chain runs to 283 residues: S-adenosylmethionine mitochondrial carrier protein homolog (283 aa).

3 Solcar repeats span residues 11–84, 93–178, and 187–275; these read LKFF…GKQF, DSPY…FKLQ, and STPF…TTRI. 6 helical membrane passes run 14 to 34, 55 to 75, 99 to 119, 152 to 172, 190 to 210, and 248 to 268; these read FHAL…LFPI, GIYK…ALFF, MAAA…VEIA, RGFG…FPLW, FSVA…TTPL, and FAGF…FFGF.

This sequence belongs to the mitochondrial carrier (TC 2.A.29) family.

It is found in the mitochondrion inner membrane. Its function is as follows. Mitochondrial solute carriers shuttle metabolites, nucleotides, and cofactors through the mitochondrial inner membrane. May mediate the transport of S-adenosylmethionine (SAM) into the mitochondria. The protein is S-adenosylmethionine mitochondrial carrier protein homolog of Drosophila melanogaster (Fruit fly).